A 342-amino-acid chain; its full sequence is Heat-inducible transcription repressor HrcA (342 aa).

This sequence belongs to the HrcA family.

Negative regulator of class I heat shock genes (grpE-dnaK-dnaJ and groELS operons). Prevents heat-shock induction of these operons. The chain is Heat-inducible transcription repressor HrcA from Mesoplasma florum (strain ATCC 33453 / NBRC 100688 / NCTC 11704 / L1) (Acholeplasma florum).